Reading from the N-terminus, the 216-residue chain is Sporozoite antigen (216 aa).

Residues Gln194–Trp216 are disordered.

This chain is Sporozoite antigen, found in Eimeria tenella (Coccidian parasite).